We begin with the raw amino-acid sequence, 259 residues long: Oxidase ustYb (259 aa).

A helical transmembrane segment spans residues 36 to 56; sequence IIYTSLAFVGFIEILFFGIFF. N-linked (GlcNAc...) asparagine glycans are attached at residues Asn102 and Asn122. Short sequence motifs (HXXHC) lie at residues 147–151 and 197–201; these read HQLHC and HVDHC.

It belongs to the ustYa family.

It is found in the membrane. The protein operates within mycotoxin biosynthesis. In terms of biological role, oxidase; part of the gene cluster that mediates the biosynthesis of the secondary metabolite ustiloxin B, an antimitotic tetrapeptide. First, ustA is processed by the subtilisin-like endoprotease Kex2 that is outside the ustiloxin B gene cluster, at the C-terminal side of Arg-Lys, after transfer to Golgi apparatus through the endoplasmic reticulum (ER). Cleavage by KEX2 generates 16 peptides YAIG-I to YAIG-XVI. To process the precursor peptide further, at least two peptidases are necessary to cleave the N-terminal and C-terminal sides of the Tyr-Ala-Ile-Gly core peptide which serves as backbone for the synthesis of ustiloxin B, through cyclization and modification of the tyrosine with a non-protein coding amino acid, norvaline. One of the two peptidases must be the serine peptidase ustP; and the other pepdidase is probably ustH. Macrocyclization of the core peptide derived from ustA requires the tyrosinase ustQ, as well as the homologous oxidases ustYa and ustYb, and leads to the production of the first cyclization product N-desmethylustiloxin F. For the formation of N-desmethylustiloxin F, three oxidation steps are required, hydroxylation at the benzylic position, hydroxylation at either the aromatic ring of Tyr or beta-position of Ile, and oxidative cyclization. UstQ may catalyze the oxidation of a phenol moiety, whereas the ustYa and ustYb are most likely responsible for the remaining two-step oxidations. N-desmethylustiloxin F is then methylated by ustM to yield ustiloxin F which in turn substrate of the cytochrome P450 monooxygenase ustC which catalyzes the formation of S-deoxyustiloxin H. The flavoprotein monooxygenases ustF1 and ustF2 then participate in the modification of the side chain of S-deoxyustiloxin H, leading to the synthesis of an oxime intermediate, via ustiloxin H. Finally, carboxylative dehydration performed by the cysteine desulfurase-like protein ustD yields ustiloxin B. This is Oxidase ustYb from Aspergillus flavus (strain ATCC 200026 / FGSC A1120 / IAM 13836 / NRRL 3357 / JCM 12722 / SRRC 167).